The chain runs to 462 residues: Malonyl-coenzyme:anthocyanin 5-O-glucoside-6'''-O-malonyltransferase (462 aa).

Catalysis depends on proton acceptor residues His-167 and Asp-390.

Belongs to the plant acyltransferase family. In terms of tissue distribution, detected in petals and sepals, and at lower levels in bracts and red stems.

The catalysed reaction is pelargonidin 3-O-(6-O-[(E)-caffeoyl]-beta-D-glucoside) 5-O-beta-D-glucoside + malonyl-CoA = 4'''-demalonylsalvianin + CoA. It participates in pigment biosynthesis; anthocyanin biosynthesis. Its activity is regulated as follows. Completely inhibited by 10 mM p-coumaric acid, this inhibition is rapid, reversible and non-competitive. Completely inhibited by 0.1 mM Cu(2+), 0.1 mM Hg(2+) and 10 mM caffeic acid. Partially inhibited by 5 mM N-ethylmaleimide, 1 mM diethylpyrocarbonate and 1 mM acetyl-CoA. In terms of biological role, catalyzes the transfer of a malonyl group from malonyl-CoA to the 6'''-hydroxyl group of the 5-glucosyl moiety of anthocyanins. Active towards bisdemalonylsalvianin (pelargonidin 3-O-(6-caffeoyl-beta-D-glucoside) 5-O-beta-D-glucoside) and shisonin, but not towards nodemalonylsalvianin, salvianin, pelargonidin 3,5-diglucoside and delphinidin 3,5-diglucoside. This chain is Malonyl-coenzyme:anthocyanin 5-O-glucoside-6'''-O-malonyltransferase, found in Salvia splendens (Scarlet sage).